The primary structure comprises 217 residues: Adenylate kinase (217 aa).

10-15 (GAGKGT) is an ATP binding site. Residues 30–59 (STGDMLRAAVKAGTEMGLAAKKVMDAGGLV) form an NMP region. Residues Thr-31, Arg-36, 57-59 (GLV), 85-88 (GFPR), and Gln-92 each bind AMP. An LID region spans residues 122-159 (GRRSHPASGRTYHVKFNPPKVDGVDDVTGEPLVQRDDD). Residues Arg-123 and 132–133 (TY) each bind ATP. AMP contacts are provided by Arg-156 and Arg-167. Residue Gly-203 coordinates ATP.

It belongs to the adenylate kinase family. As to quaternary structure, monomer.

Its subcellular location is the cytoplasm. The enzyme catalyses AMP + ATP = 2 ADP. It functions in the pathway purine metabolism; AMP biosynthesis via salvage pathway; AMP from ADP: step 1/1. Its function is as follows. Catalyzes the reversible transfer of the terminal phosphate group between ATP and AMP. Plays an important role in cellular energy homeostasis and in adenine nucleotide metabolism. The polypeptide is Adenylate kinase (Leptothrix cholodnii (strain ATCC 51168 / LMG 8142 / SP-6) (Leptothrix discophora (strain SP-6))).